Consider the following 431-residue polypeptide: Gamma-glutamyl phosphate reductase (431 aa).

It belongs to the gamma-glutamyl phosphate reductase family.

It is found in the cytoplasm. The catalysed reaction is L-glutamate 5-semialdehyde + phosphate + NADP(+) = L-glutamyl 5-phosphate + NADPH + H(+). Its pathway is amino-acid biosynthesis; L-proline biosynthesis; L-glutamate 5-semialdehyde from L-glutamate: step 2/2. Its function is as follows. Catalyzes the NADPH-dependent reduction of L-glutamate 5-phosphate into L-glutamate 5-semialdehyde and phosphate. The product spontaneously undergoes cyclization to form 1-pyrroline-5-carboxylate. This is Gamma-glutamyl phosphate reductase from Acaryochloris marina (strain MBIC 11017).